The following is a 129-amino-acid chain: NHP2-like protein 1 homolog (129 aa).

It belongs to the eukaryotic ribosomal protein eL8 family.

It is found in the nucleus. The protein resides in the nucleolus. Binds to the 5'-stem-loop of U4 snRNA and may play a role in the late stage of spliceosome assembly. The protein undergoes a conformational change upon RNA-binding. The chain is NHP2-like protein 1 homolog from Dictyostelium discoideum (Social amoeba).